A 472-amino-acid chain; its full sequence is Membrane-bound acylglycerophosphatidylinositol O-acyltransferase MBOAT7 (472 aa).

Residues methionine 1–glutamate 5 lie on the Cytoplasmic side of the membrane. Residues tryptophan 6–phenylalanine 22 traverse the membrane as a helical segment. Topologically, residues lysine 23–glycine 33 are lumenal. Residues alanine 34–isoleucine 57 form a helical membrane-spanning segment. The Cytoplasmic portion of the chain corresponds to leucine 58 to alanine 73. The helical transmembrane segment at leucine 74 to glycine 93 threads the bilayer. The Lumenal portion of the chain corresponds to leucine 94–arginine 194. A helical membrane pass occupies residues alanine 195–phenylalanine 212. The Cytoplasmic portion of the chain corresponds to proline 213–leucine 231. A helical transmembrane segment spans residues phenylalanine 232–phenylalanine 261. Residues glycine 262–tryptophan 426 are Lumenal-facing. N-linked (GlcNAc...) asparagine glycosylation occurs at asparagine 321. Residues alanine 427–leucine 447 traverse the membrane as a helical segment. The Cytoplasmic segment spans residues glycine 448–glutamate 472. The segment at glycine 450–glutamate 472 is disordered.

It belongs to the membrane-bound acyltransferase family. In terms of assembly, interacts with SPTSSA; the interaction facilitates MBOAT7 location to mitochondria-associated membranes (MAMs).

It is found in the endoplasmic reticulum membrane. It catalyses the reaction a 1-acyl-sn-glycero-3-phospho-(1D-myo-inositol) + an acyl-CoA = a 1,2-diacyl-sn-glycero-3-phospho-(1D-myo-inositol) + CoA. It carries out the reaction a 1-acyl-sn-glycero-3-phospho-(1D-myo-inositol) + (5Z,8Z,11Z,14Z)-eicosatetraenoyl-CoA = a 1-acyl-2-(5Z,8Z,11Z,14Z-eicosatetraenoyl)-sn-glycero-3-phospho-(1D-myo-inositol) + CoA. The enzyme catalyses (5Z,8Z,11Z,14Z)-eicosatetraenoyl-CoA + 1-hexadecanoyl-sn-glycero-3-phosphocholine = 1-hexadecanoyl-2-(5Z,8Z,11Z,14Z-eicosatetraenoyl)-sn-glycero-3-phosphocholine + CoA. The catalysed reaction is 1-octadecanoyl-sn-glycero-3-phospho-(1D-myo-inositol) + (5Z,8Z,11Z,14Z)-eicosatetraenoyl-CoA = 1-octadecanoyl-2-(5Z,8Z,11Z,14Z-eicosatetraenoyl)-sn-glycero-3-phospho-(1D-myo-inositol) + CoA. Its pathway is lipid metabolism; phospholipid metabolism. Its function is as follows. Acyltransferase which catalyzes the transfer of an acyl group from an acyl-CoA to a lysophosphatidylinositol (1-acylglycerophosphatidylinositol or LPI) leading to the production of a phosphatidylinositol (1,2-diacyl-sn-glycero-3-phosphoinositol or PI) and participates in the reacylation step of the phospholipid remodeling pathway also known as the Lands cycle. Prefers arachidonoyl-CoA as the acyl donor, thus contributing to the regulation of free levels arachidonic acid in cell. In liver, participates in the regulation of triglyceride metabolism through the phosphatidylinositol acyl-chain remodeling regulation. The polypeptide is Membrane-bound acylglycerophosphatidylinositol O-acyltransferase MBOAT7 (MBOAT7) (Bos taurus (Bovine)).